Here is an 85-residue protein sequence, read N- to C-terminus: Large ribosomal subunit protein bL27 (85 aa).

Residues 1 to 21 form a disordered region; that stretch reads MAHKKGLGSTKNGRDSQAKRL.

Belongs to the bacterial ribosomal protein bL27 family.

The sequence is that of Large ribosomal subunit protein bL27 from Thermus thermophilus (strain ATCC BAA-163 / DSM 7039 / HB27).